The following is a 470-amino-acid chain: Argininosuccinate lyase (470 aa).

The protein belongs to the lyase 1 family. Argininosuccinate lyase subfamily.

It is found in the cytoplasm. The catalysed reaction is 2-(N(omega)-L-arginino)succinate = fumarate + L-arginine. It participates in amino-acid biosynthesis; L-arginine biosynthesis; L-arginine from L-ornithine and carbamoyl phosphate: step 3/3. In Mycobacterium sp. (strain JLS), this protein is Argininosuccinate lyase.